The following is an 859-amino-acid chain: Homeobox-leucine zipper protein HOX32 (859 aa).

Positions 7 to 31 (AAVHGVGRQDRSSPGGGGAPQVDTG) are disordered. Positions 29–92 (DTGKYVRYTP…NRRCREKQRK (64 aa)) form a DNA-binding region, homeobox. The stretch at 100-129 (VNRKLTAMNKLLMEENDRLQKQVSRLVYEN) forms a coiled coil. Residues 146–164 (TSCESVVTSGQHHQQQNPA) are compositionally biased toward polar residues. The disordered stretch occupies residues 146–172 (TSCESVVTSGQHHQQQNPAATRPQRDA). Positions 171-393 (DANNPAGLLA…LRHIRQIAHE (223 aa)) constitute an START domain.

This sequence belongs to the HD-ZIP homeobox family. Class III subfamily. In terms of tissue distribution, expressed in seedlings, roots, stems, leaf sheaths and blades and panicles.

Its subcellular location is the nucleus. Probable transcription factor. In Oryza sativa subsp. indica (Rice), this protein is Homeobox-leucine zipper protein HOX32 (HOX32).